The primary structure comprises 625 residues: Probable potassium transport system protein Kup (625 aa).

A run of 12 helical transmembrane segments spans residues 10-30, 50-70, 102-122, 142-162, 172-192, 215-235, 250-270, 284-304, 340-360, 369-389, 397-417, and 422-442; these read LAAL…TSPL, LLGV…LKYV, YFPL…DSVI, FDPY…SVQA, FGPI…VNII, FLAF…EALY, WFLV…ALLL, LGAW…IIAS, IYIP…VVGF, AYGI…FFVI, LLLC…LFSA, and LFHG…LMLT.

This sequence belongs to the HAK/KUP transporter (TC 2.A.72) family.

The protein localises to the cell inner membrane. It carries out the reaction K(+)(in) + H(+)(in) = K(+)(out) + H(+)(out). Transport of potassium into the cell. Likely operates as a K(+):H(+) symporter. This chain is Probable potassium transport system protein Kup, found in Janthinobacterium sp. (strain Marseille) (Minibacterium massiliensis).